The following is a 486-amino-acid chain: UDP-N-acetylmuramate--L-alanine ligase (486 aa).

126 to 132 (GTHGKTS) is an ATP binding site.

This sequence belongs to the MurCDEF family.

The protein resides in the cytoplasm. The catalysed reaction is UDP-N-acetyl-alpha-D-muramate + L-alanine + ATP = UDP-N-acetyl-alpha-D-muramoyl-L-alanine + ADP + phosphate + H(+). The protein operates within cell wall biogenesis; peptidoglycan biosynthesis. Its function is as follows. Cell wall formation. The polypeptide is UDP-N-acetylmuramate--L-alanine ligase (Corynebacterium glutamicum (strain R)).